Here is a 404-residue protein sequence, read N- to C-terminus: Ubiquitin-like modifier-activating enzyme 5 (404 aa).

Residues Gly-83, Asp-104, Lys-127, Asn-150, and Asn-184 each coordinate ATP. Cys-226 and Cys-229 together coordinate Zn(2+). Cys-250 serves as the catalytic Glycyl thioester intermediate. Residues Cys-303 and Cys-308 each coordinate Zn(2+). Positions 372-404 (APEKSSETSEETVSAATADETSLEDLMAQMKSM) are disordered. Residues 382-391 (ETVSAATADE) are compositionally biased toward low complexity.

Belongs to the ubiquitin-activating E1 family. UBA5 subfamily. Interacts (via C-terminus) with Ufc1. Interacts with Ufm1.

The protein localises to the cytoplasm. It is found in the nucleus. The protein resides in the golgi apparatus. In terms of biological role, E1-like enzyme which activates UFM1. The polypeptide is Ubiquitin-like modifier-activating enzyme 5 (Drosophila melanogaster (Fruit fly)).